Consider the following 552-residue polypeptide: Lysine--tRNA ligase (552 aa).

Residues 71–79 (PSGLPHLGT) carry the 'HIGH' region motif. The 'KMSKS' region signature appears at 319–323 (KISKS). Residue Lys322 coordinates ATP.

This sequence belongs to the class-I aminoacyl-tRNA synthetase family.

The protein resides in the cytoplasm. The catalysed reaction is tRNA(Lys) + L-lysine + ATP = L-lysyl-tRNA(Lys) + AMP + diphosphate. This Caulobacter sp. (strain K31) protein is Lysine--tRNA ligase.